Here is a 375-residue protein sequence, read N- to C-terminus: GDSL esterase/lipase At5g45960 (375 aa).

Positions 1–28 (MRSHHRHFSSYVSFILFLFLFFISFSSS) are cleaved as a signal peptide. Catalysis depends on Ser-54, which acts as the Nucleophile. N-linked (GlcNAc...) asparagine glycosylation occurs at Asn-340. Catalysis depends on residues Asp-348 and His-351.

Belongs to the 'GDSL' lipolytic enzyme family.

It is found in the secreted. The protein is GDSL esterase/lipase At5g45960 of Arabidopsis thaliana (Mouse-ear cress).